Reading from the N-terminus, the 409-residue chain is Serine/threonine transporter SstT (409 aa).

The next 9 membrane-spanning stretches (helical) occupy residues 17–37 (LVGQIIVGLIAGLLLASFFPA), 49–69 (FVSALKAVAPVLVFVLVMASI), 83–103 (ILLLYLVGTFSAAVVAVIASF), 142–162 (ALISANFIGILAWAIGLGIAF), 180–200 (VSLIVKVVIRFAPLGIFGLVA), 218–238 (LVVLLGCMLFVAFVVNPLIVF), 301–321 (GAAITITVLTLAAVHTLGIAV), 331–351 (VVASICACGASGVAGGSLLLI), and 357–377 (LFGIPSEVAMQVVAVGFIIAI).

The protein belongs to the dicarboxylate/amino acid:cation symporter (DAACS) (TC 2.A.23) family.

Its subcellular location is the cell inner membrane. The catalysed reaction is L-serine(in) + Na(+)(in) = L-serine(out) + Na(+)(out). It carries out the reaction L-threonine(in) + Na(+)(in) = L-threonine(out) + Na(+)(out). Involved in the import of serine and threonine into the cell, with the concomitant import of sodium (symport system). This Pseudomonas aeruginosa (strain LESB58) protein is Serine/threonine transporter SstT.